The sequence spans 88 residues: Small ribosomal subunit protein uS15 (88 aa).

Belongs to the universal ribosomal protein uS15 family. In terms of assembly, part of the 30S ribosomal subunit. Forms a bridge to the 50S subunit in the 70S ribosome, contacting the 23S rRNA.

In terms of biological role, one of the primary rRNA binding proteins, it binds directly to 16S rRNA where it helps nucleate assembly of the platform of the 30S subunit by binding and bridging several RNA helices of the 16S rRNA. Forms an intersubunit bridge (bridge B4) with the 23S rRNA of the 50S subunit in the ribosome. This chain is Small ribosomal subunit protein uS15, found in Paracidovorax citrulli (strain AAC00-1) (Acidovorax citrulli).